We begin with the raw amino-acid sequence, 386 residues long: Succinate--CoA ligase [ADP-forming] subunit beta (386 aa).

An ATP-grasp domain is found at 9-244 (KAVLRSYGVS…LDEEDSKEIE (236 aa)). ATP is bound by residues Lys-46, 53–55 (GRG), Glu-99, Cys-102, and Glu-107. Mg(2+)-binding residues include Asn-199 and Asp-213. Substrate-binding positions include Asn-264 and 321-323 (GIM).

Belongs to the succinate/malate CoA ligase beta subunit family. As to quaternary structure, heterotetramer of two alpha and two beta subunits. Requires Mg(2+) as cofactor.

The catalysed reaction is succinate + ATP + CoA = succinyl-CoA + ADP + phosphate. The enzyme catalyses GTP + succinate + CoA = succinyl-CoA + GDP + phosphate. Its pathway is carbohydrate metabolism; tricarboxylic acid cycle; succinate from succinyl-CoA (ligase route): step 1/1. Functionally, succinyl-CoA synthetase functions in the citric acid cycle (TCA), coupling the hydrolysis of succinyl-CoA to the synthesis of either ATP or GTP and thus represents the only step of substrate-level phosphorylation in the TCA. The beta subunit provides nucleotide specificity of the enzyme and binds the substrate succinate, while the binding sites for coenzyme A and phosphate are found in the alpha subunit. In Bacillus cereus (strain G9842), this protein is Succinate--CoA ligase [ADP-forming] subunit beta.